A 146-amino-acid polypeptide reads, in one-letter code: MSVLNESEALAPSFSTKDKYLCLTICGYRKPGMSEGDYRNHMVNVSAPMTKDLMVKYGVKRWTQIHNQSATRALMSQLFDPQMCNLADFDCFSQVFFRNIDDYKRMKLDPWYKKHLMHDHEVFADTKRSMMTIGWVEEFNGFENVL.

Residues 31 to 126 enclose the EthD domain; sequence PGMSEGDYRN…MHDHEVFADT (96 aa).

Belongs to the tpcK family.

It catalyses the reaction atrochrysone carboxylate + H(+) = atrochrysone + CO2. Its pathway is secondary metabolite biosynthesis. Functionally, decarboxylase; part of the gene cluster that mediates the biosynthesis of the dimeric xanthones cryptosporioptides. The pathway begins with the synthesis of atrochrysone thioester by the polyketide synthase dmx-nrPKS. The atrochrysone carboxyl ACP thioesterase dmxR1 then breaks the thioester bond and releases the atrochrysone carboxylic acid from dmx-nrPKS. Atrochrysone carboxylic acid is decarboxylated by the decarboxylase dmxR15, and oxidized by the anthrone oxygenase dmxR16 to yield emodin. Emodin is then reduced to emodin hydroquinone by the oxidoreductase dmxR7. A-ring reduction by the short chain dehydrogenase dmxR18, dehydration by the scytalone dehydratase-like protein dmxR17 and probable spontaneous re-oxidation, results in overall deoxygenation to chrysophanol. Baeyer-Villiger oxidation by the Baeyer-Villiger monooxygenase (BVMO) dmxR6 then yields monodictylactone in equilibrium with monodictyphenone. In the case of the cryptosporioptides biosynthesis, monodictylactone is reduced at C-12 to an alcohol (by the short chain dehydrogenases dmxR12 or dmxR8) and hydroxylated at C-5 by dmxR9, yielding the electron-rich aromatic which could eliminate H(2)O to form the ortho-quinonemethide, followed by tautomerisation to paraquinone and complete the formal reduction to produce the 10-methylgroup. Conjugate addition of C-4a-OH to the resulting paraquinone by the monooxygenase dmxR10 then gives cyclohexadienone, which is then reduced at C-5 by the short chain dehydrogenase dmxR3 to give the dihydroxanthone. The 6,7-epoxide in the cryptosporioptides could be introduced by the cytochrome P450 monooxygenase dmxL3. The highly reducing PKS dmxL2 manufactures butyrate, which is further carboxylated by dmxL1 to form ethylmalonate. It is not yet clear whether the carboxylation occurs while the butyrate is attached to the ACP of dmxL2, but this unusual fungal metabolite could then be esterified to O-5 by the O-acetyltransferase dmxR13. Finally, dimerization performed by dmxR5 gives the observed dimers cryptosporioptides A, B and C as the final products of the pathway. The chain is Decarboxylase dmxR15 from Cryptosporiopsis sp. (strain 8999).